The chain runs to 311 residues: Protoheme IX farnesyltransferase (311 aa).

9 helical membrane passes run 32-52 (VMSLVVFTALVGLMVSPVPIN), 53-73 (PWYGFLAIICIAVGGGGAGAL), 104-124 (FIFGMVLSLLSVLVMGSFINW), 125-145 (FAAFFLAFTIFFYVVIYTIWL), 153-173 (IVIGGASGAFPPMIGWAVTTG), 180-200 (FLLFLIIFMWTPPHFWALSLF), 224-244 (KQILFYTVLMVLCATAPCFTG), 245-265 (LGGVFYGIFSTILGIIFIYFA), and 285-305 (FFFSLLYLAAVFGALLIESLV).

The protein belongs to the UbiA prenyltransferase family. Protoheme IX farnesyltransferase subfamily.

It is found in the cell inner membrane. The enzyme catalyses heme b + (2E,6E)-farnesyl diphosphate + H2O = Fe(II)-heme o + diphosphate. Its pathway is porphyrin-containing compound metabolism; heme O biosynthesis; heme O from protoheme: step 1/1. Functionally, converts heme B (protoheme IX) to heme O by substitution of the vinyl group on carbon 2 of heme B porphyrin ring with a hydroxyethyl farnesyl side group. This chain is Protoheme IX farnesyltransferase, found in Bartonella tribocorum (strain CIP 105476 / IBS 506).